A 153-amino-acid polypeptide reads, in one-letter code: Endoribonuclease YbeY (153 aa).

Zn(2+) is bound by residues histidine 114, histidine 118, and histidine 124.

The protein belongs to the endoribonuclease YbeY family. Zn(2+) serves as cofactor.

The protein localises to the cytoplasm. Single strand-specific metallo-endoribonuclease involved in late-stage 70S ribosome quality control and in maturation of the 3' terminus of the 16S rRNA. This Shewanella sp. (strain MR-7) protein is Endoribonuclease YbeY.